Reading from the N-terminus, the 207-residue chain is Outer-membrane lipoprotein LolB (207 aa).

A signal peptide spans 1–21 (MPQRKISFYRLLPLATLLLAA). Cys-22 carries the N-palmitoyl cysteine lipid modification. Cys-22 carries the S-diacylglycerol cysteine lipid modification.

Belongs to the LolB family. As to quaternary structure, monomer.

It is found in the cell outer membrane. Its function is as follows. Plays a critical role in the incorporation of lipoproteins in the outer membrane after they are released by the LolA protein. The protein is Outer-membrane lipoprotein LolB of Yersinia enterocolitica serotype O:8 / biotype 1B (strain NCTC 13174 / 8081).